Here is a 265-residue protein sequence, read N- to C-terminus: Molybdenum-pterin-binding protein MopA (265 aa).

2 Mop domains span residues 126–192 and 198–264; these read RTSN…MLAA and RISA…ILAM.

It belongs to the ModE family.

This is Molybdenum-pterin-binding protein MopA (mopA) from Rhodobacter capsulatus (Rhodopseudomonas capsulata).